The following is a 321-amino-acid chain: Serine/threonine-protein phosphatase PP1 (321 aa).

Residues D60, H62, D88, and N120 each coordinate Mn(2+). Catalysis depends on H121, which acts as the Proton donor. The Mn(2+) site is built by H169 and H244. Residues K298–K321 are disordered.

Belongs to the PPP phosphatase family. As to quaternary structure, interacts with dpiA. It depends on Mn(2+) as a cofactor.

It carries out the reaction O-phospho-L-seryl-[protein] + H2O = L-seryl-[protein] + phosphate. The catalysed reaction is O-phospho-L-threonyl-[protein] + H2O = L-threonyl-[protein] + phosphate. With respect to regulation, inhibited by okadaic acid, tautomycin and calyculin A. Inhibited by phosphatase inhibitor 2 (dpiA). Functionally, protein phosphatase activity in vitro. This Dictyostelium discoideum (Social amoeba) protein is Serine/threonine-protein phosphatase PP1 (pppB).